The primary structure comprises 150 residues: UPF0208 membrane protein VP2081 (150 aa).

Transmembrane regions (helical) follow at residues 42 to 62 (FGIK…MAFN) and 70 to 90 (SIVV…WLGA).

It belongs to the UPF0208 family.

The protein localises to the cell inner membrane. The protein is UPF0208 membrane protein VP2081 of Vibrio parahaemolyticus serotype O3:K6 (strain RIMD 2210633).